Consider the following 245-residue polypeptide: Uridylate kinase (245 aa).

Lysine 18–glycine 21 contacts ATP. Position 60 (glycine 60) interacts with UMP. ATP-binding residues include glycine 61 and arginine 65. UMP contacts are provided by residues aspartate 80 and threonine 141–threonine 148. 3 residues coordinate ATP: threonine 168, tyrosine 174, and aspartate 177.

This sequence belongs to the UMP kinase family. As to quaternary structure, homohexamer.

It is found in the cytoplasm. The enzyme catalyses UMP + ATP = UDP + ADP. It participates in pyrimidine metabolism; CTP biosynthesis via de novo pathway; UDP from UMP (UMPK route): step 1/1. Its activity is regulated as follows. Inhibited by UTP. Catalyzes the reversible phosphorylation of UMP to UDP. This Pseudomonas paraeruginosa (strain DSM 24068 / PA7) (Pseudomonas aeruginosa (strain PA7)) protein is Uridylate kinase.